A 282-amino-acid chain; its full sequence is Protein GAM-1 (282 aa).

A BC-box-like motif is present at residues 251–260 (SLQDWARLGV).

As to quaternary structure, interacts with host HDAC1. Interacts with host E1-activating enzyme (SAE1/UBA2 heterodimer). Interacts with host retinoblastoma protein. Seems to form a complex with host E4F1 and HDAC1. Seems to form complexes with either CUL2-elongin BC complex-RBX1 or CUL5-elongin BC complex-RBX1. Interacts with TCEB1/Elongin-C, CUL2 and CUL5 in vitro.

The protein resides in the host nucleus. Early protein essential for viral replication. Strong and global transcriptional activator of both viral and cellular genes. Activates transcription by blocking host retinoblastoma protein (RB) and inhibiting the SUMO pathway. Inhibition of host RB leads to the activation of E2F1-dependent transcription and, in particular, of E2F1-regulated S-phase genes. Stimulation of progression from G1 to S phase allows the virus to efficiently use the cellular DNA replicating machinery to achieve viral genome replication. Blocks the SUMO pathway by targeting the E1 enzyme (SAE1/UBA2 heterodimer) to the ubiquitin-proteasome machinery. Mediates SAE1 degradation possibly through the formation of complexes with either CUL2-elongin BC complex-RBX1 or CUL5-elongin BC complex-RBX1. The degradation of UBA2 is probably a consequent effect of SAE1 disappearance. Inhibits HDAC1 sumoylation, thereby interfering with histone deacetylation mediated by HDAC1, leading to activation of transcription. Mediates induction of heat-shock response. Seems to have an antiapoptotic function. This chain is Protein GAM-1, found in Galliformes (FAdV-1).